Here is a 178-residue protein sequence, read N- to C-terminus: ATP-dependent protease subunit HslV (178 aa).

Residue threonine 7 is part of the active site. The Na(+) site is built by glycine 162, cysteine 165, and threonine 168.

The protein belongs to the peptidase T1B family. HslV subfamily. A double ring-shaped homohexamer of HslV is capped on each side by a ring-shaped HslU homohexamer. The assembly of the HslU/HslV complex is dependent on binding of ATP.

Its subcellular location is the cytoplasm. It carries out the reaction ATP-dependent cleavage of peptide bonds with broad specificity.. Allosterically activated by HslU binding. Protease subunit of a proteasome-like degradation complex believed to be a general protein degrading machinery. This Herminiimonas arsenicoxydans protein is ATP-dependent protease subunit HslV.